Consider the following 852-residue polypeptide: Taste receptor type 1 member 3 (852 aa).

Residues 1 to 20 form the signal peptide; sequence MLGPAVLGLSLWALLQPGAG. Residues 21 to 570 are Extracellular-facing; the sequence is APLCLSQQLR…FLAWGEPAVL (550 aa). N-linked (GlcNAc...) asparagine glycosylation is found at Asn85, Asn130, Asn264, Asn285, Asn380, Asn411, Asn432, and Asn475. The helical transmembrane segment at 571–591 threads the bilayer; it reads LLLLLLSLALGLVLAALGLFV. The Cytoplasmic segment spans residues 592–603; that stretch reads HHRDSPLVQASG. A helical membrane pass occupies residues 604–624; sequence GPLACFGLVCLGLVCLSVLLF. The Extracellular segment spans residues 625 to 639; it reads PGQPSPAQCLAQQPL. The helical transmembrane segment at 640 to 660 threads the bilayer; it reads SHLPLTGCLSTLFLQAAEIFV. Residues 661-682 lie on the Cytoplasmic side of the membrane; that stretch reads ESELPLSWADRLSGCLRGPWAW. The helical transmembrane segment at 683–703 threads the bilayer; sequence LVVLLAMLVEVALCTWYLVAF. Residues 704 to 729 lie on the Extracellular side of the membrane; it reads PPEVVTDWHMLPTEALVHCRTRSWVS. A helical membrane pass occupies residues 730 to 750; the sequence is FGLAHATNATLAFLCFLGTFL. Over 751–762 the chain is Cytoplasmic; the sequence is VRSQPGRYNRAR. Residues 763-783 form a helical membrane-spanning segment; it reads GLTFAMLAYFITWVSFVPLLA. Over 784 to 791 the chain is Extracellular; it reads NVQVVLRP. Residues 792–812 traverse the membrane as a helical segment; that stretch reads AVQMGALLLCVLGILAAFHLP. The Cytoplasmic portion of the chain corresponds to 813–852; the sequence is RCYLLIRQPGLNTPEFFLGGGPGDAQGRNDGDTGNQGKHE. Residues 833-852 are disordered; sequence GPGDAQGRNDGDTGNQGKHE. Basic and acidic residues predominate over residues 839 to 852; sequence GRNDGDTGNQGKHE.

This sequence belongs to the G-protein coupled receptor 3 family. TAS1R subfamily. As to quaternary structure, forms homodimers or heterodimers with TAS1R1 and TAS1R2.

It is found in the cell membrane. In terms of biological role, putative taste receptor. TAS1R1/TAS1R3 responds to the umami taste stimulus (the taste of monosodium glutamate). TAS1R2/TAS1R3 recognizes diverse natural and synthetic sweeteners. TAS1R3 is essential for the recognition and response to the disaccharide trehalose. Sequence differences within and between species can significantly influence the selectivity and specificity of taste responses. The chain is Taste receptor type 1 member 3 (TAS1R3) from Gorilla gorilla gorilla (Western lowland gorilla).